A 285-amino-acid polypeptide reads, in one-letter code: GTP cyclohydrolase 1 type 2 homolog (285 aa).

Residues His-65, His-66, Asp-104, His-230, and Glu-234 each contribute to the a divalent metal cation site.

This sequence belongs to the GTP cyclohydrolase I type 2/NIF3 family. In terms of assembly, homohexamer.

In Streptomyces coelicolor (strain ATCC BAA-471 / A3(2) / M145), this protein is GTP cyclohydrolase 1 type 2 homolog.